We begin with the raw amino-acid sequence, 105 residues long: Large ribosomal subunit protein bL21 (105 aa).

Belongs to the bacterial ribosomal protein bL21 family. As to quaternary structure, part of the 50S ribosomal subunit. Contacts protein L20.

In terms of biological role, this protein binds to 23S rRNA in the presence of protein L20. In Dictyoglomus turgidum (strain DSM 6724 / Z-1310), this protein is Large ribosomal subunit protein bL21.